Reading from the N-terminus, the 622-residue chain is Probable potassium transport system protein Kup (622 aa).

The next 12 membrane-spanning stretches (helical) occupy residues 9 to 29 (LPAVTLAAIGVVYGDIGTSPL), 52 to 72 (FLSLIFWALILVVSVKYLAFV), 101 to 121 (VLLVLGLIGGGFFYGEVVITP), 137 to 157 (PALTPYILPVAIAVLTALFVI), 169 to 189 (FGPVMLLWFFSLGTLGAISIF), 213 to 233 (VAFFSLGSVVLAITGVEALYA), 247 to 267 (WFTVALPALLLNYFGQGALIL), 287 to 309 (FPMVILSTMATVIASQAVISGVF), 337 to 357 (IYIPFVNWMLYIAVLIVVVTF), 363 to 383 (LAAAYGIAVTGTMVITTILAC), 396 to 416 (VVKIILISLLLIDVPLFLANV), and 419 to 439 (FFAGGWLPVMLGAIMFMVMAT).

Belongs to the HAK/KUP transporter (TC 2.A.72) family.

It localises to the cell inner membrane. The catalysed reaction is K(+)(in) + H(+)(in) = K(+)(out) + H(+)(out). Transport of potassium into the cell. Likely operates as a K(+):H(+) symporter. The chain is Probable potassium transport system protein Kup from Tolumonas auensis (strain DSM 9187 / NBRC 110442 / TA 4).